The sequence spans 217 residues: MGQKVNPLGIRLNITRTWDSVWYADKDYSTFLIEDQKIRKFLKKRLSHAGLSSVKIERTGEQVRIKLFTARPGIVIGKKGAEIEILKRELEKLVSRKVTLDIQEVRRPEADAQLVADNIAQQLARRVAFRRAMKKAVSSALRFGVQGIKIACSGRLGGAEMSRCEWVREGRVPLHTLRADVDYALSESHTTYGIIGVKVWIFKGEVLSDKDKGAVAQ.

Residues 38 to 106 (IRKFLKKRLS…KVTLDIQEVR (69 aa)) form the KH type-2 domain.

It belongs to the universal ribosomal protein uS3 family. Part of the 30S ribosomal subunit. Forms a tight complex with proteins S10 and S14.

Its function is as follows. Binds the lower part of the 30S subunit head. Binds mRNA in the 70S ribosome, positioning it for translation. This is Small ribosomal subunit protein uS3 from Desulfotalea psychrophila (strain LSv54 / DSM 12343).